The following is a 217-amino-acid chain: Nucleoside diphosphate kinase homolog 5 (217 aa).

Positions 18-151 (ERTLALIKPD…REIRFMFPHS (134 aa)) are NDK.

It belongs to the NDK family.

The protein resides in the cell projection. Its subcellular location is the cilium. Functionally, functions as part of axonemal radial spoke complexes that play an important part in the motility of sperm and cilia. Does not seem to have nucleoside diphosphate kinase (NDPK) activity. Exhibits a 3'-5' exonuclease activity with a preference for single-stranded DNA, suggesting roles in DNA proofreading and repair. The protein is Nucleoside diphosphate kinase homolog 5 (nme5) of Danio rerio (Zebrafish).